A 552-amino-acid chain; its full sequence is CTP synthase (552 aa).

The segment at 1 to 271 is amidoligase domain; the sequence is MASAASSKHL…DAFVVRRLGL (271 aa). Residue serine 18 coordinates CTP. Serine 18 contributes to the UTP binding site. ATP contacts are provided by residues 19–24 and aspartate 76; that span reads SLGKGL. Mg(2+) is bound by residues aspartate 76 and glutamate 145. Residues 152-154, 192-197, and lysine 228 each bind CTP; these read DIE and KTKPTQ. UTP contacts are provided by residues 192–197 and lysine 228; that span reads KTKPTQ. Positions 296–546 constitute a Glutamine amidotransferase type-1 domain; that stretch reads TIALVGKYVD…IEAALKYSAG (251 aa). L-glutamine is bound at residue glycine 359. Cysteine 386 acts as the Nucleophile; for glutamine hydrolysis in catalysis. L-glutamine is bound by residues 387-390, glutamate 410, and arginine 472; that span reads LGLQ. Residues histidine 519 and glutamate 521 contribute to the active site.

The protein belongs to the CTP synthase family. In terms of assembly, homotetramer.

The catalysed reaction is UTP + L-glutamine + ATP + H2O = CTP + L-glutamate + ADP + phosphate + 2 H(+). The enzyme catalyses L-glutamine + H2O = L-glutamate + NH4(+). It carries out the reaction UTP + NH4(+) + ATP = CTP + ADP + phosphate + 2 H(+). It participates in pyrimidine metabolism; CTP biosynthesis via de novo pathway; CTP from UDP: step 2/2. Its activity is regulated as follows. Allosterically activated by GTP, when glutamine is the substrate; GTP has no effect on the reaction when ammonia is the substrate. The allosteric effector GTP functions by stabilizing the protein conformation that binds the tetrahedral intermediate(s) formed during glutamine hydrolysis. Inhibited by the product CTP, via allosteric rather than competitive inhibition. Its function is as follows. Catalyzes the ATP-dependent amination of UTP to CTP with either L-glutamine or ammonia as the source of nitrogen. Regulates intracellular CTP levels through interactions with the four ribonucleotide triphosphates. This is CTP synthase from Thermobifida fusca (strain YX).